Here is a 981-residue protein sequence, read N- to C-terminus: Colossin-C (981 aa).

An N-terminal signal peptide occupies residues 1 to 23; sequence MKILYSLLLISSIILNTVLNISS. Asn-63 is a glycosylation site (N-linked (GlcNAc...) asparagine). Residues 172-195 are disordered; it reads EQTQPPTQPPTQPPTQPPTPPPFT. The span at 177–194 shows a compositional bias: pro residues; the sequence is PTQPPTQPPTQPPTPPPF. 3 N-linked (GlcNAc...) asparagine glycosylation sites follow: Asn-222, Asn-591, and Asn-811.

This sequence belongs to the serine-aspartate repeat-containing protein (SDr) family.

It is found in the secreted. This is Colossin-C (colC) from Dictyostelium discoideum (Social amoeba).